The sequence spans 360 residues: MKPSIVAKLEALHERHEEVQALLGDAGIIADQDRFRALSREYAQLSDVSRCFTDWQQVQDDIETAQMMLDDPEMREMAQEELREAKEKSEQLEQQLQVLLLPKDPDDERNAFLEVRAGTGGDEAALFAGDLFRMYSRYAESRRWRVEIMSMSEGEHGGYKEIIAKISGDGVYGRLKFESGGHRVQRVPATESQGRIHTSACTVAVMPELPEAELPDINPADLRIDTFRSSGAGGQHVNTTDSAIRITHLPTGIVVECQDERSQHKNKAKALSVLGARIHAAETAKRQQAEASTRRNLLGSGDRSDRNRTYNFPQGRVTDHRINLTLYRLDETMEGKLDMLIEPIVQEHQADLLAALSEQE.

An N5-methylglutamine modification is found at Q235. Positions 284–313 are disordered; it reads AKRQQAEASTRRNLLGSGDRSDRNRTYNFP.

Belongs to the prokaryotic/mitochondrial release factor family. In terms of processing, methylated by PrmC. Methylation increases the termination efficiency of RF1.

It is found in the cytoplasm. Its function is as follows. Peptide chain release factor 1 directs the termination of translation in response to the peptide chain termination codons UAG and UAA. This is Peptide chain release factor 1 from Salmonella schwarzengrund (strain CVM19633).